A 161-amino-acid polypeptide reads, in one-letter code: Heme transporter hrg-6 (161 aa).

4 consecutive transmembrane segments (helical) span residues I13–A33, V38–L58, V75–I95, and W115–I135.

It belongs to the HRG family.

Its subcellular location is the membrane. In terms of biological role, heme transporter. This Caenorhabditis elegans protein is Heme transporter hrg-6 (hrg-6).